The chain runs to 519 residues: Exodeoxyribonuclease 7 large subunit (519 aa).

It belongs to the XseA family. As to quaternary structure, heterooligomer composed of large and small subunits.

It localises to the cytoplasm. The catalysed reaction is Exonucleolytic cleavage in either 5'- to 3'- or 3'- to 5'-direction to yield nucleoside 5'-phosphates.. Functionally, bidirectionally degrades single-stranded DNA into large acid-insoluble oligonucleotides, which are then degraded further into small acid-soluble oligonucleotides. This is Exodeoxyribonuclease 7 large subunit from Cereibacter sphaeroides (strain ATCC 17025 / ATH 2.4.3) (Rhodobacter sphaeroides).